The primary structure comprises 329 residues: Protein-arginine N-acetylglucosaminyltransferase NleB1 (329 aa).

N-beta-linked (GlcNAc) arginine; by autocatalysis glycosylation is present at Arg-13. Position 48–50 (48–50 (QWF)) interacts with UDP-N-acetyl-alpha-D-glucosamine. A glycan (N-beta-linked (GlcNAc) arginine; by autocatalysis) is linked at Arg-53. UDP-N-acetyl-alpha-D-glucosamine is bound at residue Tyr-72. An N-beta-linked (GlcNAc) arginine; by autocatalysis glycan is attached at Arg-159. A UDP-N-acetyl-alpha-D-glucosamine-binding site is contributed by 219–222 (YLDA). The DXD motif signature appears at 221–223 (DAD). Asp-223 contributes to the Mn(2+) binding site. Glu-253 (proton acceptor) is an active-site residue. Arg-293 is a glycosylation site (N-beta-linked (GlcNAc) arginine; by autocatalysis). Residues Asn-320 and Ser-322 each contribute to the Mn(2+) site. Residues Ser-322 and 327-329 (SSW) each bind UDP-N-acetyl-alpha-D-glucosamine.

It belongs to the glycosyltransferase NleB family. It depends on Mn(2+) as a cofactor. Post-translationally, auto-glycosylated: arginine GlcNAcylation is required for activity toward death domain-containing host target proteins.

The protein localises to the secreted. Its subcellular location is the host cytoplasm. It catalyses the reaction L-arginyl-[protein] + UDP-N-acetyl-alpha-D-glucosamine = N(omega)-(N-acetyl-beta-D-glucosaminyl)-L-arginyl-[protein] + UDP + H(+). Protein-arginine N-acetylglucosaminyltransferase activity is inhibited by 100066N compound (flavone analog) and 102644N compound (a substituted isoxazole). Functionally, protein-arginine N-acetylglucosaminyltransferase effector that disrupts TNF signaling in infected cells, including NF-kappa-B signaling, apoptosis and necroptosis. Acts by catalyzing the transfer of a single N-acetylglucosamine (GlcNAc) to a conserved arginine residue in the death domain of host proteins such as FADD: arginine GlcNAcylation prevents homotypic/heterotypic death domain interactions and assembly of the oligomeric TNF-alpha receptor complex, thereby disrupting TNF signaling. Also acts on host proteins without a death domain: catalyzes arginine GlcNAcylation of host GAPDH protein, thereby preventing GAPDH interaction with TRAF2, leading to inhibit NF-kappa-B signaling. Catalyzes auto-GlcNAcylation, which is required for activity toward death domain-containing host target proteins. This chain is Protein-arginine N-acetylglucosaminyltransferase NleB1, found in Escherichia coli O157:H7.